The sequence spans 349 residues: tRNA pseudouridine synthase D (349 aa).

Phenylalanine 27 provides a ligand contact to substrate. Aspartate 80 acts as the Nucleophile in catalysis. Residue asparagine 129 coordinates substrate. One can recognise a TRUD domain in the interval 155–303 (GVPNYFGAQR…VEAARRAMLL (149 aa)). Phenylalanine 329 provides a ligand contact to substrate.

The protein belongs to the pseudouridine synthase TruD family.

It catalyses the reaction uridine(13) in tRNA = pseudouridine(13) in tRNA. Its function is as follows. Responsible for synthesis of pseudouridine from uracil-13 in transfer RNAs. The polypeptide is tRNA pseudouridine synthase D (Escherichia coli O9:H4 (strain HS)).